The chain runs to 245 residues: Phosphoadenosine 5'-phosphosulfate reductase (245 aa).

The Nucleophile; cysteine thiosulfonate intermediate role is filled by cysteine 239.

This sequence belongs to the PAPS reductase family. CysH subfamily.

Its subcellular location is the cytoplasm. It catalyses the reaction [thioredoxin]-disulfide + sulfite + adenosine 3',5'-bisphosphate + 2 H(+) = [thioredoxin]-dithiol + 3'-phosphoadenylyl sulfate. The protein operates within sulfur metabolism; hydrogen sulfide biosynthesis; sulfite from sulfate: step 3/3. In terms of biological role, catalyzes the formation of sulfite from phosphoadenosine 5'-phosphosulfate (PAPS) using thioredoxin as an electron donor. In Baumannia cicadellinicola subsp. Homalodisca coagulata, this protein is Phosphoadenosine 5'-phosphosulfate reductase.